The sequence spans 1427 residues: Protein NPAT (1427 aa).

The interaction with MIZF stretch occupies residues 1–318 (MLLPSDVARL…EEAIQDILEQ (318 aa)). Residues 3-35 (LPSDVARLVLGYLQQENLISTCQTFILESSDLK) form the LisH domain. Required for activation of histone gene transcription and interaction with MIZF regions lie at residues 5-25 (SDVA…STCQ) and 121-145 (KRQR…YLSG). Residues 199–231 (KKAHASLMSPGRRKSESQRKSTTLSGPHSTIRN) are disordered. Ser207 is modified (phosphoserine). The span at 218 to 231 (KSTTLSGPHSTIRN) shows a compositional bias: polar residues. The mediates transcriptional activation stretch occupies residues 262–338 (KLAENINKFL…FDLFDYGKTK (77 aa)). Residues Ser554 and Ser599 each carry the phosphoserine modification. Polar residues predominate over residues 628-644 (SLSSTKQPSNDSASVEL). 2 disordered regions span residues 628-669 (SLSS…VKEE) and 683-732 (EKVA…SAEI). The segment at 629-653 (LSSTKQPSNDSASVELNHTENEAQA) is required for acceleration of G1 phase. Residues 654–665 (SKSENSQEPSSS) show a composition bias toward low complexity. Over residues 695 to 711 (VENSHSLPPESVCSSVG) the composition is skewed to polar residues. Ser775 and Ser779 each carry phosphoserine; by CDK2. Required for acceleration of G1 phase stretches follow at residues 828-853 (QNED…IQLM) and 1039-1054 (KSEE…SIVP). Disordered stretches follow at residues 1095–1121 (FPNL…EKEK) and 1133–1152 (SAIS…KVSP). The span at 1097-1114 (NLDSPNVSSTLKPPSNNA) shows a compositional bias: polar residues. A Phosphoserine; by CDK2 modification is found at Ser1100. Residues Lys1116 and Lys1149 each participate in a glycyl lysine isopeptide (Lys-Gly) (interchain with G-Cter in SUMO2) cross-link. The segment covering 1140–1151 (TIRETQSEKKVS) has biased composition (basic and acidic residues). 2 positions are modified to phosphoserine: Ser1151 and Ser1200. Lys1228 bears the N6-acetyllysine mark. Residues 1228 to 1252 (KDLKQEQTKSASSLITTEMLQDIQR) are required for acceleration of G1 phase. 2 disordered regions span residues 1253 to 1327 (HSSV…SENS) and 1348 to 1413 (SATP…FPAG). The residue at position 1254 (Ser1254) is a Phosphoserine. Thr1270 carries the post-translational modification Phosphothreonine; by CDK2. The segment covering 1276–1285 (GEKHKEEPID) has biased composition (basic and acidic residues). A Glycyl lysine isopeptide (Lys-Gly) (interchain with G-Cter in SUMO2) cross-link involves residue Lys1280. The required for acceleration of G1 phase stretch occupies residues 1325–1349 (ENSVNMAAHTLMILSRAAISRTTSA). Residues 1348–1365 (SATPLKDNTQQFRASSRS) show a composition bias toward polar residues. Position 1350 is a phosphothreonine; by CDK2 (Thr1350). Basic and acidic residues predominate over residues 1371-1382 (KIEELDERERNS). Residues 1383-1394 (RPSSKNLTNSSI) show a composition bias toward polar residues. Residues 1396-1406 (MKKKKIKKKKL) show a composition bias toward basic residues.

This sequence belongs to the NPAT family. In terms of assembly, interacts with the cylin/CDK complexes CCNE1/CDK2 and CCNA1/CDK2. Interacts with BZW1, CASP8AP2, CREBBP, MIZF and YY1. Interacts with the RUVBL1, RUVBL2 and TRRAP subunits of the NuA4 complex. May also interact with GAPDH, NME1, NME2 and STIP1. Post-translationally, phosphorylated at Ser-775, Ser-779, Ser-1100, Thr-1270 and Thr-1350 by CCNE1/CDK2 at G1-S transition and until prophase, which promotes association with histone gene clusters and stimulates activation of histone transcription. Also phosphorylated by CCNA1/CDK2 in vitro. Ubiquitously expressed.

It localises to the nucleus. Its subcellular location is the cajal body. Functionally, required for progression through the G1 and S phases of the cell cycle and for S phase entry. Activates transcription of the histone H2A, histone H2B, histone H3 and histone H4 genes in conjunction with MIZF. Also positively regulates the ATM, MIZF and PRKDC promoters. Transcriptional activation may be accomplished at least in part by the recruitment of the NuA4 histone acetyltransferase (HAT) complex to target gene promoters. The sequence is that of Protein NPAT (NPAT) from Homo sapiens (Human).